Here is a 200-residue protein sequence, read N- to C-terminus: Type 1 fimbriae regulatory protein FimB (200 aa).

The Tyr recombinase domain maps to 8–189 (KKRNFLTHSE…NAGRFYGIWD (182 aa)). Active-site residues include arginine 47, lysine 72, histidine 141, arginine 144, and histidine 167. The active-site O-(3'-phospho-DNA)-tyrosine intermediate is the tyrosine 176.

The protein belongs to the 'phage' integrase family.

Functionally, fimB is one of the 2 regulatory proteins which control the phase variation of type 1 fimbriae in E.coli. These proteins mediate the periodic inversion of a 300bp DNA segment that harbors the promoter for the fimbrial structural gene, fimA. FimB switches fimA on. The protein is Type 1 fimbriae regulatory protein FimB (fimB) of Escherichia coli O157:H7.